Here is a 224-residue protein sequence, read N- to C-terminus: Deoxyribose-phosphate aldolase (224 aa).

Asp-94 (proton donor/acceptor) is an active-site residue. Residue Lys-156 is the Schiff-base intermediate with acetaldehyde of the active site. Lys-184 functions as the Proton donor/acceptor in the catalytic mechanism.

This sequence belongs to the DeoC/FbaB aldolase family. DeoC type 1 subfamily.

Its subcellular location is the cytoplasm. The enzyme catalyses 2-deoxy-D-ribose 5-phosphate = D-glyceraldehyde 3-phosphate + acetaldehyde. It participates in carbohydrate degradation; 2-deoxy-D-ribose 1-phosphate degradation; D-glyceraldehyde 3-phosphate and acetaldehyde from 2-deoxy-alpha-D-ribose 1-phosphate: step 2/2. Functionally, catalyzes a reversible aldol reaction between acetaldehyde and D-glyceraldehyde 3-phosphate to generate 2-deoxy-D-ribose 5-phosphate. The protein is Deoxyribose-phosphate aldolase of Methanocella arvoryzae (strain DSM 22066 / NBRC 105507 / MRE50).